We begin with the raw amino-acid sequence, 591 residues long: V-type ATP synthase alpha chain (591 aa).

Residue G242–T249 coordinates ATP.

Belongs to the ATPase alpha/beta chains family.

It carries out the reaction ATP + H2O + 4 H(+)(in) = ADP + phosphate + 5 H(+)(out). Its function is as follows. Produces ATP from ADP in the presence of a proton gradient across the membrane. The V-type alpha chain is a catalytic subunit. The chain is V-type ATP synthase alpha chain (atpA) from Chlamydia pneumoniae (Chlamydophila pneumoniae).